The following is a 210-amino-acid chain: Proteasome subunit beta (210 aa).

A propeptide spans 1-9 (removed in mature form; by autocatalysis); the sequence is MDNDKHLKG. The Nucleophile role is filled by T10.

The protein belongs to the peptidase T1B family. In terms of assembly, the 20S proteasome core is composed of 14 alpha and 14 beta subunits that assemble into four stacked heptameric rings, resulting in a barrel-shaped structure. The two inner rings, each composed of seven catalytic beta subunits, are sandwiched by two outer rings, each composed of seven alpha subunits. The catalytic chamber with the active sites is on the inside of the barrel. Has a gated structure, the ends of the cylinder being occluded by the N-termini of the alpha-subunits. Is capped at one or both ends by the proteasome regulatory ATPase, PAN.

The protein localises to the cytoplasm. It catalyses the reaction Cleavage of peptide bonds with very broad specificity.. With respect to regulation, the formation of the proteasomal ATPase PAN-20S proteasome complex, via the docking of the C-termini of PAN into the intersubunit pockets in the alpha-rings, triggers opening of the gate for substrate entry. Interconversion between the open-gate and close-gate conformations leads to a dynamic regulation of the 20S proteasome proteolysis activity. Functionally, component of the proteasome core, a large protease complex with broad specificity involved in protein degradation. In Methanococcoides burtonii (strain DSM 6242 / NBRC 107633 / OCM 468 / ACE-M), this protein is Proteasome subunit beta.